Consider the following 188-residue polypeptide: Segregation and condensation protein B (188 aa).

It belongs to the ScpB family. In terms of assembly, homodimer. Homodimerization may be required to stabilize the binding of ScpA to the Smc head domains. Component of a cohesin-like complex composed of ScpA, ScpB and the Smc homodimer, in which ScpA and ScpB bind to the head domain of Smc. The presence of the three proteins is required for the association of the complex with DNA.

It localises to the cytoplasm. Participates in chromosomal partition during cell division. May act via the formation of a condensin-like complex containing Smc and ScpA that pull DNA away from mid-cell into both cell halves. The sequence is that of Segregation and condensation protein B from Streptococcus gordonii (strain Challis / ATCC 35105 / BCRC 15272 / CH1 / DL1 / V288).